The primary structure comprises 703 residues: Fanconi anemia group B protein homolog (703 aa).

In terms of assembly, belongs to the multisubunit FA complex composed of FANCA, FANCB, FANCC, FANCE, FANCF, FANCG, FANCL/PHF9 and FANCM.

The protein localises to the nucleus. In terms of biological role, DNA repair protein required for FANCD2 ubiquitination. The protein is Fanconi anemia group B protein homolog (Fancb) of Mus musculus (Mouse).